Consider the following 491-residue polypeptide: UDP-N-acetylmuramate--L-alanine ligase (491 aa).

126-132 (GTHGKTT) serves as a coordination point for ATP.

This sequence belongs to the MurCDEF family.

It is found in the cytoplasm. It catalyses the reaction UDP-N-acetyl-alpha-D-muramate + L-alanine + ATP = UDP-N-acetyl-alpha-D-muramoyl-L-alanine + ADP + phosphate + H(+). Its pathway is cell wall biogenesis; peptidoglycan biosynthesis. Its function is as follows. Cell wall formation. This Shigella sonnei (strain Ss046) protein is UDP-N-acetylmuramate--L-alanine ligase.